The following is a 969-amino-acid chain: RNA polymerase-associated protein RapA (969 aa).

The Helicase ATP-binding domain maps to 164-334 (EVGRRYAPRV…FARLRLLDPD (171 aa)). 177–184 (DEVGLGKT) serves as a coordination point for ATP. The DEAH box motif lies at 280–283 (DEAH). The region spanning 492–668 (RVNWLLELLK…GKSDGLESLI (177 aa)) is the Helicase C-terminal domain.

It belongs to the SNF2/RAD54 helicase family. RapA subfamily. In terms of assembly, interacts with the RNAP. Has a higher affinity for the core RNAP than for the holoenzyme. Its ATPase activity is stimulated by binding to RNAP.

In terms of biological role, transcription regulator that activates transcription by stimulating RNA polymerase (RNAP) recycling in case of stress conditions such as supercoiled DNA or high salt concentrations. Probably acts by releasing the RNAP, when it is trapped or immobilized on tightly supercoiled DNA. Does not activate transcription on linear DNA. Probably not involved in DNA repair. This is RNA polymerase-associated protein RapA from Aliivibrio fischeri (strain MJ11) (Vibrio fischeri).